The chain runs to 540 residues: Chaperonin GroEL 2 (540 aa).

Residues 30 to 33, lysine 51, 87 to 91, glycine 415, 479 to 481, and aspartate 495 contribute to the ATP site; these read TLGP, DGTTT, and NAA.

Belongs to the chaperonin (HSP60) family. As to quaternary structure, forms a cylinder of 14 subunits composed of two heptameric rings stacked back-to-back. Interacts with the co-chaperonin GroES.

It localises to the cytoplasm. The catalysed reaction is ATP + H2O + a folded polypeptide = ADP + phosphate + an unfolded polypeptide.. Its function is as follows. Together with its co-chaperonin GroES, plays an essential role in assisting protein folding. The GroEL-GroES system forms a nano-cage that allows encapsulation of the non-native substrate proteins and provides a physical environment optimized to promote and accelerate protein folding. This is Chaperonin GroEL 2 from Burkholderia vietnamiensis (strain G4 / LMG 22486) (Burkholderia cepacia (strain R1808)).